We begin with the raw amino-acid sequence, 560 residues long: Glutamate--tRNA ligase, chloroplastic/mitochondrial (560 aa).

Residue 47 to 49 (RFA) participates in L-glutamate binding. The 'HIGH' region motif lies at 50–60 (PSPTGNLHVGG). Histidine 57 contacts ATP. L-glutamate is bound by residues glutamate 83, 235 to 239 (YNFCV), and arginine 253. ATP-binding positions include glutamate 256 and 291–295 (KLSKR). The short motif at 291–295 (KLSKR) is the 'KMSKS' region element.

Belongs to the class-I aminoacyl-tRNA synthetase family. Glutamate--tRNA ligase type 1 subfamily.

It localises to the plastid. Its subcellular location is the chloroplast. The protein localises to the mitochondrion. The catalysed reaction is tRNA(Glu) + L-glutamate + ATP = L-glutamyl-tRNA(Glu) + AMP + diphosphate. In terms of biological role, catalyzes the attachment of glutamate to tRNA(Glu) in a two-step reaction: glutamate is first activated by ATP to form Glu-AMP and then transferred to the acceptor end of tRNA(Glu). This Hordeum vulgare (Barley) protein is Glutamate--tRNA ligase, chloroplastic/mitochondrial.